Consider the following 169-residue polypeptide: Actin-related protein 2/3 complex subunit 4 (169 aa).

It belongs to the ARPC4 family. As to quaternary structure, component of the Arp2/3 complex composed of arpB/Arp2, arpC/Arp3, arcA/p41-arc, arcB/p34-arc, arcC/p21-arc, arcD/p20-arc and arcE/p16-arc. Interacts with carmil (via the region between the LRR domain and COOH-terminal proline-rich domain); carmil is required for Arp2/3-dependent actin nucleation. Arp2/3 complex, MyoB, MyoC, and the alpha and beta subunits of capping protein all form a larger complex with carmil.

Its subcellular location is the cytoplasm. It is found in the cytoskeleton. The protein resides in the cytosol. It localises to the cell cortex. The protein localises to the cell projection. Its subcellular location is the pseudopodium. Functions as a component of the Arp2/3 complex which is involved in regulation of actin polymerization and together with an activating nucleation-promoting factor (NPF) mediates the formation of branched actin networks. Seems to contact the pointed end of the daughter actin filament. The Arp2/3 complex is involved in organizing the actin system in cell motility and chemotaxis, in phagocytosis and macropinocytosis, at late steps of endosome processing, and in mitosis. In concert with a group of other proteins, the Arp2/3 complex plays a general role in the rapid activation and adaptation of the actin system to its multiple functions. The protein is Actin-related protein 2/3 complex subunit 4 (arcD) of Dictyostelium discoideum (Social amoeba).